We begin with the raw amino-acid sequence, 77 residues long: Small ribosomal subunit protein uS4 (77 aa).

The tract at residues 45-77 is disordered; the sequence is PFGGGRPGRVKRKNQKAAAKKASGGDGDEEDEE. The segment covering 52 to 63 has biased composition (basic residues); sequence GRVKRKNQKAAA.

The protein belongs to the universal ribosomal protein uS4 family.

This Nicotiana tabacum (Common tobacco) protein is Small ribosomal subunit protein uS4 (RPS9).